Here is a 686-residue protein sequence, read N- to C-terminus: Epsin (686 aa).

Residues 14-145 (DAVLNTPEIE…QDDQRIKEER (132 aa)) enclose the ENTH domain. Disordered stretches follow at residues 177 to 417 (YDSD…FNNN) and 463 to 571 (NSSM…TMRP). A compositionally biased stretch (polar residues) spans 185–211 (NQRDSYGGNQRDSYGGNQRDSYGGNQR). The segment covering 212 to 225 (ETTRRDSFNGRDEG) has biased composition (basic and acidic residues). A compositionally biased stretch (polar residues) spans 237 to 256 (SYDSDPYSNTRAEYENYSNR). 2 stretches are compositionally biased toward low complexity: residues 269-340 (SNNS…SGPS) and 383-417 (NNTN…FNNN). The span at 491–503 (FDQQSGDFSNKND) shows a compositional bias: polar residues. Over residues 504 to 521 (GQQKPKDTNDPWSKKDLF) the composition is skewed to basic and acidic residues. Residues 527–547 (GNQNPNQSPVNNTNNNNNGNT) show a composition bias toward low complexity. The segment covering 558–567 (PITSAGSTIP) has biased composition (polar residues).

This sequence belongs to the epsin family.

Its subcellular location is the membrane. The protein localises to the clathrin-coated pit. Binds to membranes enriched in phosphatidylinositol 4,5-bisphosphate (PtdIns(4,5)P2). The sequence is that of Epsin (epnA) from Dictyostelium discoideum (Social amoeba).